Here is a 377-residue protein sequence, read N- to C-terminus: Beta-lactamase (377 aa).

An N-terminal signal peptide occupies residues 1 to 19 (MFKTTLCALLITASCSTFA). Ser80 serves as the catalytic Acyl-ester intermediate. The a beta-lactam site is built by Ser80, Gln136, Tyr166, Asn168, Ala334, and Asn359.

This sequence belongs to the class-C beta-lactamase family. Monomer.

The protein localises to the periplasm. The catalysed reaction is a beta-lactam + H2O = a substituted beta-amino acid. Inhibited by the beta-lactamase-blocking agents avibactam, enmetazobactam, relebactam, nacubactam, vaborbactam, taniborbactam, zidebactam, and beta-lactam-analog boronic acids, via a covalent binding to Ser-80. Inhibited by non-beta-lactam, benzo(b)thiophene-2-boronic acid (BZBTH2B) and various cyclic boronates. Not inhibited by clavulanic acid. Inhibited by O-aryloxycarbonyl hydroxamates, via cross-linking of the active site Ser-80 to Lys-331. Weakly inhibited by citric acid. In terms of biological role, class C beta-lactamase which confers resistance to penicillins and cephalosporins. Has benzylpenicillin- and cephaloridine-hydrolyzing activity. Has weak cefuroxime, cefotaxime, cefoxitin and oxacillin-hydrolyzing activities. This chain is Beta-lactamase, found in Escherichia coli (strain K12).